The sequence spans 421 residues: MSKTHLTEQKFSDFALHPKVVEVLEKKGFHNCTPIQALALPLTLAGRDVAGQAQTGTGKTMAFLTSTFHYLLSHPAIADRKVNQPRALIMAPTRELAVQIHADAEPLAEATGLKLGLAYGGDGYDKQLKVLESGVDILIGTTGRLIDYAKQNHINLGAIQVVVLDEADRMYDLGFIKDIRWLFRRMPPANQRLNMLFSATLSYRVRELAFEQMNNAEYIEVEPEQKTGHRIKEELFYPSNEEKMRLLQTLIEEEWPDRAIIFANTKHRCEEIWGHLAADGHRVGLLTGDVAQKKRLRILDEFTRGDLDILVATDVAARGLHIPAVTHVFNYDLPDDCEDYVHRIGRTGRAGASGHSISLACEEYALNLPAIETYIGHSIPVSKYNPDALMTDLPKPLRLTRPRTGNGPRRTGAPRNRRRSG.

Residues 9 to 37 carry the Q motif motif; sequence QKFSDFALHPKVVEVLEKKGFHNCTPIQA. The 180-residue stretch at 40-219 folds into the Helicase ATP-binding domain; that stretch reads LPLTLAGRDV…FEQMNNAEYI (180 aa). ATP is bound at residue 53-60; that stretch reads AQTGTGKT. The DEAD box motif lies at 165-168; it reads DEAD. The Helicase C-terminal domain occupies 245–390; it reads RLLQTLIEEE…VSKYNPDALM (146 aa). Residues 392–421 are disordered; sequence DLPKPLRLTRPRTGNGPRRTGAPRNRRRSG. The span at 402–414 shows a compositional bias: low complexity; that stretch reads PRTGNGPRRTGAP.

Belongs to the DEAD box helicase family. RhlB subfamily. In terms of assembly, component of the RNA degradosome, which is a multiprotein complex involved in RNA processing and mRNA degradation.

The protein resides in the cytoplasm. It catalyses the reaction ATP + H2O = ADP + phosphate + H(+). In terms of biological role, DEAD-box RNA helicase involved in RNA degradation. Has RNA-dependent ATPase activity and unwinds double-stranded RNA. The polypeptide is ATP-dependent RNA helicase RhlB (Shigella boydii serotype 18 (strain CDC 3083-94 / BS512)).